A 110-amino-acid polypeptide reads, in one-letter code: MEAIAKHQFARVSAQKGRLVADQIRGLPVEKALDILAYSPKAAAGLIKKVLESAIANAEHNEGADIDELKVSRVFLDEGPTMKRIKPRAKGRADRIFKRTSHITVVVSDS.

The protein belongs to the universal ribosomal protein uL22 family. Part of the 50S ribosomal subunit.

Functionally, this protein binds specifically to 23S rRNA; its binding is stimulated by other ribosomal proteins, e.g. L4, L17, and L20. It is important during the early stages of 50S assembly. It makes multiple contacts with different domains of the 23S rRNA in the assembled 50S subunit and ribosome. The globular domain of the protein is located near the polypeptide exit tunnel on the outside of the subunit, while an extended beta-hairpin is found that lines the wall of the exit tunnel in the center of the 70S ribosome. In Idiomarina loihiensis (strain ATCC BAA-735 / DSM 15497 / L2-TR), this protein is Large ribosomal subunit protein uL22.